The following is a 372-amino-acid chain: Chaperone protein DnaJ (372 aa).

One can recognise a J domain in the interval 5 to 69 (DYYEVLGVSK…DKRKQYDQFG (65 aa)). The CR-type zinc finger occupies 139 to 221 (GVDKIIELDL…CKGKGKYLER (83 aa)). Zn(2+) is bound by residues Cys-152, Cys-155, Cys-169, Cys-172, Cys-195, Cys-198, Cys-209, and Cys-212. CXXCXGXG motif repeat units follow at residues 152 to 159 (CSVCFGSG), 169 to 176 (CNNCHGTG), 195 to 202 (CNVCNGAG), and 209 to 216 (CKNCKGKG).

It belongs to the DnaJ family. As to quaternary structure, homodimer. The cofactor is Zn(2+).

It is found in the cytoplasm. Functionally, participates actively in the response to hyperosmotic and heat shock by preventing the aggregation of stress-denatured proteins and by disaggregating proteins, also in an autonomous, DnaK-independent fashion. Unfolded proteins bind initially to DnaJ; upon interaction with the DnaJ-bound protein, DnaK hydrolyzes its bound ATP, resulting in the formation of a stable complex. GrpE releases ADP from DnaK; ATP binding to DnaK triggers the release of the substrate protein, thus completing the reaction cycle. Several rounds of ATP-dependent interactions between DnaJ, DnaK and GrpE are required for fully efficient folding. Also involved, together with DnaK and GrpE, in the DNA replication of plasmids through activation of initiation proteins. This is Chaperone protein DnaJ from Mycoplasma mycoides subsp. mycoides SC (strain CCUG 32753 / NCTC 10114 / PG1).